The chain runs to 355 residues: Arginine kinase (355 aa).

A Phosphagen kinase N-terminal domain is found at 6–90 (TLEKLEAGFS…FDPIIEDYHN (85 aa)). 63-67 (GVGIY) provides a ligand contact to substrate. One can recognise a Phosphagen kinase C-terminal domain in the interval 118–355 (FVVSTRVRCG…AELIKIEKSL (238 aa)). ATP is bound by residues 121-125 (STRVR) and histidine 184. Glutamate 224 contributes to the substrate binding site. Arginine 228 provides a ligand contact to ATP. Residue cysteine 270 coordinates substrate. ATP-binding positions include 279–283 (RASVH) and 308–313 (RGTRGE). Glutamate 313 serves as a coordination point for substrate.

This sequence belongs to the ATP:guanido phosphotransferase family.

The catalysed reaction is L-arginine + ATP = N(omega)-phospho-L-arginine + ADP + H(+). In Plodia interpunctella (Indianmeal moth), this protein is Arginine kinase (ARGK).